The sequence spans 198 residues: Mediator of RNA polymerase II transcription subunit 20 (198 aa).

The protein belongs to the Mediator complex subunit 20 family. As to quaternary structure, component of the Mediator complex.

Its subcellular location is the nucleus. Component of the Mediator complex, a coactivator involved in the regulated transcription of nearly all RNA polymerase II-dependent genes. Mediator functions as a bridge to convey information from gene-specific regulatory proteins to the basal RNA polymerase II transcription machinery. Mediator is recruited to promoters by direct interactions with regulatory proteins and serves as a scaffold for the assembly of a functional preinitiation complex with RNA polymerase II and the general transcription factors. This is Mediator of RNA polymerase II transcription subunit 20 (mdt-20) from Caenorhabditis briggsae.